Here is a 20-residue protein sequence, read N- to C-terminus: L-amino-acid oxidase L2 (20 aa).

The protein belongs to the flavin monoamine oxidase family. FIG1 subfamily. As to quaternary structure, monomer. This is in contrast with most of its orthologs, that are non-covalently linked homodimers. It depends on FAD as a cofactor. In terms of processing, N-glycosylated. In terms of tissue distribution, expressed by the venom gland.

Its subcellular location is the secreted. It carries out the reaction an L-alpha-amino acid + O2 + H2O = a 2-oxocarboxylate + H2O2 + NH4(+). The enzyme catalyses L-leucine + O2 + H2O = 4-methyl-2-oxopentanoate + H2O2 + NH4(+). The catalysed reaction is L-phenylalanine + O2 + H2O = 3-phenylpyruvate + H2O2 + NH4(+). It catalyses the reaction L-tryptophan + O2 + H2O = indole-3-pyruvate + H2O2 + NH4(+). It carries out the reaction L-methionine + O2 + H2O = 4-methylsulfanyl-2-oxobutanoate + H2O2 + NH4(+). The enzyme catalyses L-isoleucine + O2 + H2O = (S)-3-methyl-2-oxopentanoate + H2O2 + NH4(+). The catalysed reaction is L-tyrosine + O2 + H2O = 3-(4-hydroxyphenyl)pyruvate + H2O2 + NH4(+). In terms of biological role, catalyzes an oxidative deamination of predominantly hydrophobic and aromatic L-amino acids, thus producing hydrogen peroxide that may contribute to the diverse toxic effects of this enzyme. Is active on L-Ile, L-Leu, L-Met, L-Phe, L-Trp, and L-Tyr. Exhibits diverse biological activities, such as hemorrhage, hemolysis, edema, apoptosis of vascular endothelial cells or tumor cell lines, antibacterial and antiparasitic activities, as well as regulation of platelet aggregation. Its effect on platelets is controversial, since it either induces aggregation or inhibits agonist-induced aggregation. These different effects are probably due to different experimental conditions. This is L-amino-acid oxidase L2 from Daboia russelii (Russel's viper).